The chain runs to 75 residues: Small ribosomal subunit protein bS18 (75 aa).

It belongs to the bacterial ribosomal protein bS18 family. In terms of assembly, part of the 30S ribosomal subunit. Forms a tight heterodimer with protein bS6.

Binds as a heterodimer with protein bS6 to the central domain of the 16S rRNA, where it helps stabilize the platform of the 30S subunit. In Aliivibrio fischeri (strain ATCC 700601 / ES114) (Vibrio fischeri), this protein is Small ribosomal subunit protein bS18.